The chain runs to 568 residues: AP2-like ethylene-responsive transcription factor PLT2 (568 aa).

Low complexity predominate over residues 151–171; sequence ASPAETSADNSSSTTNTSGGA. The tract at residues 151-173 is disordered; that stretch reads ASPAETSADNSSSTTNTSGGAIV. 2 consecutive DNA-binding regions (AP2/ERF) follow at residues 190-256 and 292-350; these read IYRG…TNFP and MYRG…TNFE. Positions 548-568 are disordered; it reads WNSGESAQGSNPGGVFTMWNE.

This sequence belongs to the AP2/ERF transcription factor family. AP2 subfamily. Post-translationally, stabilized in root meristems by reactive oxygen species (ROS) mediated oxidative post-translational modification triggered by RGF1 hormone peptide in a RITF1-dependent manner. In terms of tissue distribution, expressed in roots, seedlings, flowers, and siliques. Also detected at low levels in leaves. In roots, specifically detected in the distal root meristem, including the QC. This tissue specificity is regulated by auxin gradient and depends on PIN proteins.

Its subcellular location is the nucleus. Probably acts as a transcriptional activator. Binds to the GCC-box pathogenesis-related promoter element. May be involved in the regulation of gene expression by stress factors and by components of stress signal transduction pathways. Master regulator of basal/root fate. Essential for root quiescent center (QC) and columella specification, stem cell activity, as well as for establishment of the stem cell niche during embryogenesis. Modulates the root polar auxin transport by regulating the distribution of PIN genes. Essential role in respecifying pattern and polarity in damaged roots. Direct target of the transcriptional corepressor TPL. Expression levels and patterns regulated post-transcriptionally by root meristem growth factors (RGFs). The sequence is that of AP2-like ethylene-responsive transcription factor PLT2 from Arabidopsis thaliana (Mouse-ear cress).